A 149-amino-acid polypeptide reads, in one-letter code: Transcriptional repressor NrdR (149 aa).

The segment at 3–34 (CPFCSATDTKVIDSRLVADGHQVRRRRECAEC) is a zinc-finger region. In terms of domain architecture, ATP-cone spans 49-139 (PRVVKQDGSR…VYRAFEDVSE (91 aa)).

Belongs to the NrdR family. The cofactor is Zn(2+).

Functionally, negatively regulates transcription of bacterial ribonucleotide reductase nrd genes and operons by binding to NrdR-boxes. The chain is Transcriptional repressor NrdR from Shewanella woodyi (strain ATCC 51908 / MS32).